A 438-amino-acid chain; its full sequence is Methylenetetrahydrofolate--tRNA-(uracil-5-)-methyltransferase TrmFO (438 aa).

9-14 (GGGLAG) is an FAD binding site.

It belongs to the MnmG family. TrmFO subfamily. The cofactor is FAD.

It is found in the cytoplasm. The catalysed reaction is uridine(54) in tRNA + (6R)-5,10-methylene-5,6,7,8-tetrahydrofolate + NADH + H(+) = 5-methyluridine(54) in tRNA + (6S)-5,6,7,8-tetrahydrofolate + NAD(+). It carries out the reaction uridine(54) in tRNA + (6R)-5,10-methylene-5,6,7,8-tetrahydrofolate + NADPH + H(+) = 5-methyluridine(54) in tRNA + (6S)-5,6,7,8-tetrahydrofolate + NADP(+). Its function is as follows. Catalyzes the folate-dependent formation of 5-methyl-uridine at position 54 (M-5-U54) in all tRNAs. This Lactobacillus gasseri (strain ATCC 33323 / DSM 20243 / BCRC 14619 / CIP 102991 / JCM 1131 / KCTC 3163 / NCIMB 11718 / NCTC 13722 / AM63) protein is Methylenetetrahydrofolate--tRNA-(uracil-5-)-methyltransferase TrmFO.